Consider the following 222-residue polypeptide: Phosphoglycolate phosphatase (222 aa).

Aspartate 8 (nucleophile) is an active-site residue. Mg(2+) contacts are provided by aspartate 8 and aspartate 10. Lysine 146 contributes to the substrate binding site. 2 residues coordinate Mg(2+): aspartate 169 and aspartate 173.

The protein belongs to the archaeal SPP-like hydrolase family. Mg(2+) is required as a cofactor.

It catalyses the reaction 2-phosphoglycolate + H2O = glycolate + phosphate. Catalyzes the dephosphorylation of 2-phosphoglycolate. This Methanothrix thermoacetophila (strain DSM 6194 / JCM 14653 / NBRC 101360 / PT) (Methanosaeta thermophila) protein is Phosphoglycolate phosphatase.